The primary structure comprises 202 residues: tRNA (pseudouridine(54)-N(1))-methyltransferase (202 aa).

S-adenosyl-L-methionine is bound by residues L134 and G155.

Belongs to the methyltransferase superfamily. TrmY family. In terms of assembly, homodimer.

It is found in the cytoplasm. It carries out the reaction pseudouridine(54) in tRNA + S-adenosyl-L-methionine = N(1)-methylpseudouridine(54) in tRNA + S-adenosyl-L-homocysteine + H(+). Specifically catalyzes the N1-methylation of pseudouridine at position 54 (Psi54) in tRNAs. This Thermococcus gammatolerans (strain DSM 15229 / JCM 11827 / EJ3) protein is tRNA (pseudouridine(54)-N(1))-methyltransferase.